A 451-amino-acid chain; its full sequence is 3-phosphoshikimate 1-carboxyvinyltransferase (451 aa).

3-phosphoshikimate is bound by residues Lys38, Ser39, and Arg43. A phosphoenolpyruvate-binding site is contributed by Lys38. Phosphoenolpyruvate contacts are provided by Gly111 and Arg140. 3-phosphoshikimate contacts are provided by Ser185, Gln187, Asp335, and Lys362. Gln187 contributes to the phosphoenolpyruvate binding site. Asp335 acts as the Proton acceptor in catalysis. The phosphoenolpyruvate site is built by Arg366 and Arg408.

This sequence belongs to the EPSP synthase family. In terms of assembly, monomer.

The protein localises to the cytoplasm. The enzyme catalyses 3-phosphoshikimate + phosphoenolpyruvate = 5-O-(1-carboxyvinyl)-3-phosphoshikimate + phosphate. It participates in metabolic intermediate biosynthesis; chorismate biosynthesis; chorismate from D-erythrose 4-phosphate and phosphoenolpyruvate: step 6/7. Catalyzes the transfer of the enolpyruvyl moiety of phosphoenolpyruvate (PEP) to the 5-hydroxyl of shikimate-3-phosphate (S3P) to produce enolpyruvyl shikimate-3-phosphate and inorganic phosphate. This Crocosphaera subtropica (strain ATCC 51142 / BH68) (Cyanothece sp. (strain ATCC 51142)) protein is 3-phosphoshikimate 1-carboxyvinyltransferase.